We begin with the raw amino-acid sequence, 372 residues long: Putative glutamate--cysteine ligase 2 (372 aa).

Belongs to the glutamate--cysteine ligase type 2 family. YbdK subfamily. In terms of assembly, homodimer.

It catalyses the reaction L-cysteine + L-glutamate + ATP = gamma-L-glutamyl-L-cysteine + ADP + phosphate + H(+). Functionally, ATP-dependent carboxylate-amine ligase which exhibits weak glutamate--cysteine ligase activity. The sequence is that of Putative glutamate--cysteine ligase 2 (ybdK) from Salmonella agona (strain SL483).